Reading from the N-terminus, the 167-residue chain is UTP pyrophosphatase (167 aa).

The catalysed reaction is UTP + H2O = UMP + diphosphate + H(+). Specifically catalyzes the hydrolysis of UTP to UMP and diphosphate in vitro, albeit at apparently slow rate. Shows no activity towards ATP, GTP, CTP, dTTP and ITP as substrates. This is UTP pyrophosphatase from Escherichia coli (strain K12).